The chain runs to 305 residues: Glutaminase 2 (305 aa).

7 residues coordinate substrate: Ser-61, Asn-113, Glu-158, Asn-165, Tyr-189, Tyr-241, and Val-259.

The protein belongs to the glutaminase family. Homotetramer.

The catalysed reaction is L-glutamine + H2O = L-glutamate + NH4(+). The protein is Glutaminase 2 of Clostridium perfringens (strain 13 / Type A).